Here is a 351-residue protein sequence, read N- to C-terminus: UDP-3-O-acylglucosamine N-acyltransferase (351 aa).

Residue His-240 is the Proton acceptor of the active site.

The protein belongs to the transferase hexapeptide repeat family. LpxD subfamily. In terms of assembly, homotrimer.

It carries out the reaction a UDP-3-O-[(3R)-3-hydroxyacyl]-alpha-D-glucosamine + a (3R)-hydroxyacyl-[ACP] = a UDP-2-N,3-O-bis[(3R)-3-hydroxyacyl]-alpha-D-glucosamine + holo-[ACP] + H(+). It functions in the pathway bacterial outer membrane biogenesis; LPS lipid A biosynthesis. Its function is as follows. Catalyzes the N-acylation of UDP-3-O-acylglucosamine using 3-hydroxyacyl-ACP as the acyl donor. Is involved in the biosynthesis of lipid A, a phosphorylated glycolipid that anchors the lipopolysaccharide to the outer membrane of the cell. The polypeptide is UDP-3-O-acylglucosamine N-acyltransferase (Pseudomonas syringae pv. syringae (strain B728a)).